Here is a 425-residue protein sequence, read N- to C-terminus: UPF0597 protein Swoo_4889 (425 aa).

It belongs to the UPF0597 family.

The polypeptide is UPF0597 protein Swoo_4889 (Shewanella woodyi (strain ATCC 51908 / MS32)).